Here is a 63-residue protein sequence, read N- to C-terminus: MKISCFLLLILSLYFFQINQAIGPDTKKCVQRKNACHYFECPWLYYSVGTCYKGKGKCCQKRY.

Residues Met-1 to Ala-21 form the signal peptide. 3 disulfide bridges follow: Cys-29–Cys-58, Cys-36–Cys-51, and Cys-41–Cys-59.

Belongs to the beta-defensin family. Only expressed in epididymis (caput, corpus and cauda).

The protein localises to the secreted. In terms of biological role, synthetic Defb38 kills both Gram-negative (E.coli and P.aeruginosa) and Gram-positive (E.faecium) bacteria. The chain is Beta-defensin 38 (Defb38) from Mus musculus (Mouse).